Reading from the N-terminus, the 178-residue chain is MINTLRELLSGKVAVAILGKTHGLKGELKLHPFTNFPEIIESLEEIFLYNEKTKQFMVATVENLRLADGYYIIKLNGVENVENARKFVGSKVYINKDELPNLSKDEYYFFEIVGSQVIDESGKVLGVVDEVIQTGSNDVIVVNKNKEDEILIPVIYDYIITLDKENKKIVVKVPEWLD.

Positions 103-177 (SKDEYYFFEI…KIVVKVPEWL (75 aa)) constitute a PRC barrel domain.

Belongs to the RimM family. In terms of assembly, binds ribosomal protein uS19.

It is found in the cytoplasm. An accessory protein needed during the final step in the assembly of 30S ribosomal subunit, possibly for assembly of the head region. Essential for efficient processing of 16S rRNA. May be needed both before and after RbfA during the maturation of 16S rRNA. It has affinity for free ribosomal 30S subunits but not for 70S ribosomes. This chain is Ribosome maturation factor RimM, found in Thermosipho africanus (strain TCF52B).